The sequence spans 699 residues: Kinesin-II 85 kDa subunit (699 aa).

Positions 10–342 (NVRVVVRCRP…LRYANRAKNI (333 aa)) constitute a Kinesin motor domain. Residue 97–104 (GQTGTGKT) coordinates ATP. A coiled-coil region spans residues 341 to 619 (NIKNKAKINE…EDIGEWQLKC (279 aa)). 3 disordered regions span residues 369-415 (KQIS…LSPE), 432-456 (EEKK…ESEL), and 660-699 (GMKY…ALLQ). The span at 376-395 (EGLDDDEESGSEESGDEEAG) shows a compositional bias: acidic residues. Basic residues predominate over residues 400 to 411 (KKKRKGKNPKRK). The globular stretch occupies residues 620-699 (VAYTGNNMRK…MASSIDALLQ (80 aa)). Over residues 667 to 679 (QGKSGRPKTSSGR) the composition is skewed to polar residues.

It belongs to the TRAFAC class myosin-kinesin ATPase superfamily. Kinesin family. Kinesin II subfamily. Heterotrimer of a 115 kDa subunit (KAP115) and two kinesin-like subunits of 95 kDa (KRP95) and 85 kDa (KRP85). The N-terminus is blocked.

It localises to the cytoplasm. The protein resides in the cytoskeleton. This is Kinesin-II 85 kDa subunit (KRP85) from Strongylocentrotus purpuratus (Purple sea urchin).